A 176-amino-acid polypeptide reads, in one-letter code: Ribosome maturation factor RimM (176 aa).

A PRC barrel domain is found at 100–173; the sequence is KDEYHYHDLI…WLLINPPPGL (74 aa).

It belongs to the RimM family. As to quaternary structure, binds ribosomal protein uS19.

The protein localises to the cytoplasm. An accessory protein needed during the final step in the assembly of 30S ribosomal subunit, possibly for assembly of the head region. Essential for efficient processing of 16S rRNA. May be needed both before and after RbfA during the maturation of 16S rRNA. It has affinity for free ribosomal 30S subunits but not for 70S ribosomes. The polypeptide is Ribosome maturation factor RimM (Prochlorococcus marinus (strain NATL2A)).